Consider the following 400-residue polypeptide: Phosphoglycerate kinase (400 aa).

Substrate contacts are provided by residues 21–23, Arg-36, 59–62, Arg-119, and Arg-160; these read DFN and HLGR. Residues Lys-211, Glu-329, and 356–359 each bind ATP; that span reads GGDS.

It belongs to the phosphoglycerate kinase family. In terms of assembly, monomer.

Its subcellular location is the cytoplasm. The catalysed reaction is (2R)-3-phosphoglycerate + ATP = (2R)-3-phospho-glyceroyl phosphate + ADP. It participates in carbohydrate degradation; glycolysis; pyruvate from D-glyceraldehyde 3-phosphate: step 2/5. The polypeptide is Phosphoglycerate kinase (Lactiplantibacillus plantarum (strain ATCC BAA-793 / NCIMB 8826 / WCFS1) (Lactobacillus plantarum)).